The following is a 153-amino-acid chain: Catabolic 3-dehydroquinase (153 aa).

Catalysis depends on Tyr24, which acts as the Proton acceptor. Residues Asn75, His81, and Asp88 each coordinate substrate. His101 acts as the Proton donor in catalysis. Substrate contacts are provided by residues 102 to 103 (VS) and Arg112.

This sequence belongs to the type-II 3-dehydroquinase family. As to quaternary structure, homododecamer. Adopts a ring-like structure, composed of an arrangement of two hexameric rings stacked on top of one another.

It catalyses the reaction 3-dehydroquinate = 3-dehydroshikimate + H2O. It functions in the pathway aromatic compound metabolism; 3,4-dihydroxybenzoate biosynthesis; 3,4-dihydroxybenzoate from 3-dehydroquinate: step 1/2. Its function is as follows. Is involved in the catabolism of quinate. Allows the utilization of quinate as carbon source via the beta-ketoadipate pathway. The sequence is that of Catabolic 3-dehydroquinase from Aspergillus oryzae (strain ATCC 42149 / RIB 40) (Yellow koji mold).